A 335-amino-acid chain; its full sequence is MAETATRSDSGMFWKATTYKEQYWDGYLAARPKYSSDFYERIVDYYKAHNPSPPTPTVAHDVGTGPGQVASELCKYFDKVIASDPNSTHLAVASARNEKSGLNHKITWTEVSAEDLNSHYPAGSASFLAAAECLPLLDVPRALNTFAHLLHPNGTLAAWFYGRPVFSEPTVAAKCQPILNDIIDLTFEKVIKGAPPAHKTTWKRSTDTLYSFLDNVAFPTETWRDVYRFKWNPHLPLSVVGPNACDYPIEPSSCIDPEREKVVEAKDPHFWEEVWDIFEVRRFVECLLPNIEELKSKGVYDHVEVKYKELEEAMGGANAKKEITWPVVLILATRV.

This sequence belongs to the methyltransferase superfamily.

It participates in pigment biosynthesis. The protein operates within secondary metabolite biosynthesis. Functionally, methyltransferase; part of the gene cluster that mediates the biosynthesis of pleosporalin A, ascomycone A, as well as a third cryptic naphthoquinone derived pigment, all responsible for the coloration of conidia. Essential for the production of pleosporalin A, but not the 2 other final products. The pathway begins with the biosynthesis of the cyclized heptaketide 3-acetonyl-1,6,8-trihydroxy-2-naphthaldehyde by the NR-PKS pgmA. The C-6 hydroxyl group is further methylated by the O-methyltransferase pgmB to yield fusarubinaldehyde which is in turn oxidized by the cytochrome P450 monooxygenase pgmC at C-9. The C-1 hydroxyl group is then methylated spontaneously. Although pgmE, pgmD and pgmH are essential for the production of pleosporalin A, it is not the case for the 2 other final products and it remains difficult to assign a specific function to each enzyme. PgmF and pgmG seem not to be involved in pigment biosynthesis although they were regulated by the cluster-specific transcription factor pgmR. The protein is Methyltransferase pgmE of Aspergillus terreus (strain NIH 2624 / FGSC A1156).